Consider the following 310-residue polypeptide: Olfactory receptor 5AR1 (310 aa).

The Extracellular segment spans residues 1–25; the sequence is MDKENHSVVTEFVFMGITQDPQLQI. An N-linked (GlcNAc...) asparagine glycan is attached at Asn5. A helical transmembrane segment spans residues 26–46; it reads IFFVVFLLVYLVNVIGNVGMI. The Cytoplasmic portion of the chain corresponds to 47 to 54; the sequence is ILIITDSQ. The helical transmembrane segment at 55-75 threads the bilayer; it reads LHTPMYFFLCNLSFVDLGYSS. Over 76–99 the chain is Extracellular; sequence AIAPRMLADFLTKHKVISFSSCAT. Cysteines 97 and 189 form a disulfide. Residues 100–120 traverse the membrane as a helical segment; that stretch reads QFAFFVGFVDAECYVLAAMAY. The Cytoplasmic portion of the chain corresponds to 121–133; that stretch reads DRFVAICRPLHYS. The helical transmembrane segment at 134–154 threads the bilayer; the sequence is TLMSKKVCLVLMLGSYFAGLV. Residues 155-196 lie on the Extracellular side of the membrane; the sequence is SLVAHTSLTFSLSYCGSNIINHFFCEIPPLLALSCSDTYISE. A helical membrane pass occupies residues 197 to 217; the sequence is ILLFSLCGFIEFSTILIIFIS. Cys203 is a Cu cation binding site. The Cytoplasmic segment spans residues 218-237; the sequence is YAFILIAIIRIRSAEGRLKA. Residues 238 to 258 form a helical membrane-spanning segment; the sequence is FSTCGSHLTGVTLFYGTVMFM. Met256 and Arg261 together coordinate Cu cation. Over 259–271 the chain is Extracellular; it reads YLRPTSSYSLDQD. The helical transmembrane segment at 272-292 threads the bilayer; that stretch reads KWASVFYTIIIPMLNPLIYSL. At 293–310 the chain is on the cytoplasmic side; the sequence is RNKDVKAAFKKLIGKKPQ.

The protein belongs to the G-protein coupled receptor 1 family.

The protein localises to the cell membrane. With respect to regulation, copper binding enhances receptor activity in response to odorant binding. Olfactory receptor that is activated by the binding of organosulfur odorants with thioether groups such as (methylthio)methanethiol (MTMT). The activity of this receptor is mediated by G proteins which activate adenylyl cyclase. This chain is Olfactory receptor 5AR1, found in Mus musculus (Mouse).